The sequence spans 240 residues: Ribonuclease PH (240 aa).

Phosphate contacts are provided by residues R87 and 125–127 (GTR).

This sequence belongs to the RNase PH family. Homohexameric ring arranged as a trimer of dimers.

The catalysed reaction is tRNA(n+1) + phosphate = tRNA(n) + a ribonucleoside 5'-diphosphate. Its function is as follows. Phosphorolytic 3'-5' exoribonuclease that plays an important role in tRNA 3'-end maturation. Removes nucleotide residues following the 3'-CCA terminus of tRNAs; can also add nucleotides to the ends of RNA molecules by using nucleoside diphosphates as substrates, but this may not be physiologically important. Probably plays a role in initiation of 16S rRNA degradation (leading to ribosome degradation) during starvation. In Ruminiclostridium cellulolyticum (strain ATCC 35319 / DSM 5812 / JCM 6584 / H10) (Clostridium cellulolyticum), this protein is Ribonuclease PH.